The primary structure comprises 371 residues: DNA repair and recombination protein rti1 (371 aa).

The disordered stretch occupies residues 346 to 371 (IDHNRSMPIRRPSLTSNNSANTFSTK). Polar residues predominate over residues 358-371 (SLTSNNSANTFSTK).

This sequence belongs to the RAD52 family. Interacts with rph51 and rph54.

Functionally, active in the repair of DNA damage and in mating-type switching. Probably involved in the repair of DNA double-strands breaks. Has a role in promoting S phase completion. In Schizosaccharomyces pombe (strain 972 / ATCC 24843) (Fission yeast), this protein is DNA repair and recombination protein rti1 (rti1).